Consider the following 236-residue polypeptide: CD81 antigen (236 aa).

The Cytoplasmic segment spans residues 1 to 12 (MGVEGCTKCIKY). The helical transmembrane segment at 13–33 (LLFVFNFVFWLAGGVILGVAL) threads the bilayer. Residues 34-63 (WLRHDPQTTSLLYLELGNKPAPNTFYVGIY) are Extracellular-facing. Residues 64–84 (ILIAVGAVMMFVGFLGCYGAI) traverse the membrane as a helical segment. The Cytoplasmic portion of the chain corresponds to 85–89 (QESQC). The chain crosses the membrane as a helical span at residues 90–112 (LLGTFFTCLVILFACEVAAGIWG). At 113–201 (FVNKDQIAKD…QKIDELFSGK (89 aa)) the chain is on the extracellular side. 2 disulfides stabilise this stretch: C156/C190 and C157/C175. A helical membrane pass occupies residues 202 to 224 (LYLIGIAAIVVAVIMIFEMILSM). Residue E219 participates in cholesterol binding. The Cytoplasmic segment spans residues 225-236 (VLCCGIRNSSVY).

Belongs to the tetraspanin (TM4SF) family. As to quaternary structure, homodimer. Part of a complex composed of CD19, CR2/CD21, CD81 and IFITM1/CD225 in the membrane of mature B cells. Interacts (via the second extracellular domain) with CD19; this interaction is initiated early during biosynthesis in the ER and enables trafficking of only properly folded CD19. Part of a complex that includes MHC class II/HLA-DR molecules and IFITM1. Interacts with IFITM1. Interacts with IFITM2 and IFITM3. Part of integrin-tetraspanin complex composed of CD9, CD81, beta-1 and beta-2 integrins in the membrane of monocyte/macrophages. Interacts (via the second extracellular domain) with integrin ITGAV:ITGB3. Interacts with CD247/CD3 zeta, ICAM1 and CD9 at the immune synapse on T cell membrane. Part of a GPCR-tetraspanin complex consisting at least of ADGRG1, CD81, possibly CD9, and GNA11 in which CD81 enhances the association of ADGRG1 with GNA11. Part of a complex composed of CD9, CD81, PTGFRN and IGSF8. Interacts directly with IGSF8. Interacts with CD53 and SCIMP. Interacts with SAMHD1 (via its C-terminus). Interacts with glypican GPC3 and with the transcriptional repressor HHEX; binding to GPC3 decreases the availability of free CD81 for binding to HHEX, resulting in nuclear translocation of HHEX and transcriptional repression. Interacts with CLDN1. Interacts with CLDN6 and CLDN9. In terms of processing, not glycosylated. Post-translationally, likely constitutively palmitoylated at low levels. Protein palmitoylation is up-regulated upon coligation of BCR and CD9-C2R-CD81 complexes in lipid rafts. As to expression, expressed in oocytes (at protein level). Highly expressed in granulosa cells. Expressed in skeletal muscle mainly in endothelial cells of endomysial capillaries, in satellite cells and myoblasts (at protein level). Expressed in hepatocytes (at protein level).

It is found in the cell membrane. Its subcellular location is the basolateral cell membrane. Structural component of specialized membrane microdomains known as tetraspanin-enriched microdomains (TERMs), which act as platforms for receptor clustering and signaling. Essential for trafficking and compartmentalization of CD19 receptor on the cell surface of activated B cells. Upon initial encounter with a microbial pathogen, enables the assembly of CD19-CR2 and B cell receptor complexes at signaling TERMs, lowering the threshold dose of antigen required to trigger B cell clonal expansion and humoral immune response. In T cells, associates with CD4 or CD8 coreceptors and defines the maturation state of antigen-induced synapses with B cells. Facilitates localization of CD3 in these immune synapses, required for costimulation and sustained activation of T cells, preferentially triggering T helper type 2 immune response. Can act both as positive and negative regulator of homotypic or heterotypic cell-cell fusion processes. In myoblasts, associates with another tetraspanin CD9 in complex with PTGFRN and inhibits myotube fusion during muscle regeneration. In macrophages, associates with CD9 and beta-1 and beta-2 integrins, and prevents macrophage fusion into multinucleated giant cells specialized in ingesting complement-opsonized large particles. Also prevents the fusion between mononuclear cell progenitors into osteoclasts in charge of bone resorption. Positively regulates sperm-egg fusion and may be involved in the acrosome reaction. Regulates protein trafficking in intracellular compartments. In T cells, associates with dNTPase SAMHD1 and defines its subcellular location, enabling its degradation by the proteasome and thereby controlling intracellular dNTP levels. Also regulates integrin-dependent migration of macrophages, particularly relevant for inflammatory response in the lung. Its function is as follows. (Microbial infection) Specifically required for Plasmodium yoelii infectivity of hepatocytes, controlling sporozoite entry in hepatocytes via the parasitophorous vacuole and subsequent parasite differentiation to exoerythrocytic forms. This chain is CD81 antigen, found in Mus musculus (Mouse).